The primary structure comprises 340 residues: Protein FAM50A-A (340 aa).

2 disordered regions span residues 1–22 and 123–178; these read MAQY…KKRE and NLEE…EEEN. Over residues 124–146 the composition is skewed to acidic residues; the sequence is LEEDEECEDEEGEEEESDKEDPP. Basic and acidic residues predominate over residues 169–178; sequence PDRDREEEEN.

Its subcellular location is the nucleus. Probably involved in the regulation of pre-mRNA splicing. This is Protein FAM50A-A (fam50a-a) from Xenopus laevis (African clawed frog).